A 433-amino-acid polypeptide reads, in one-letter code: Homogentisate 1,2-dioxygenase (433 aa).

Catalysis depends on H288, which acts as the Proton acceptor. 2 residues coordinate Fe cation: H331 and E337. Homogentisate-binding residues include Y346 and H367. H367 lines the Fe cation pocket.

This sequence belongs to the homogentisate dioxygenase family. Hexamer; dimer of trimers. It depends on Fe cation as a cofactor.

It catalyses the reaction homogentisate + O2 = 4-maleylacetoacetate + H(+). It participates in amino-acid degradation; L-phenylalanine degradation; acetoacetate and fumarate from L-phenylalanine: step 4/6. Its function is as follows. Involved in the catabolism of homogentisate (2,5-dihydroxyphenylacetate or 2,5-OH-PhAc), a central intermediate in the degradation of phenylalanine and tyrosine. Catalyzes the oxidative ring cleavage of the aromatic ring of homogentisate to yield maleylacetoacetate. The sequence is that of Homogentisate 1,2-dioxygenase from Pseudomonas putida (strain ATCC 700007 / DSM 6899 / JCM 31910 / BCRC 17059 / LMG 24140 / F1).